The sequence spans 336 residues: Alpha-N-acetylgalactosaminide alpha-2,6-sialyltransferase 5 (336 aa).

Residues 1–8 (MKTLMRHG) lie on the Cytoplasmic side of the membrane. A helical; Signal-anchor for type II membrane protein transmembrane segment spans residues 9–29 (LAVCLVLTTMCTSLLLVYSSL). Topologically, residues 30-336 (GSQKERPPQQ…VNHAEGKPVF (307 aa)) are lumenal. The disordered stretch occupies residues 34 to 76 (ERPPQQQQQQQQQQQQAATATGSTQLVESSPQPRRTAPAGPRQ). Low complexity predominate over residues 38–49 (QQQQQQQQQQQQ). Polar residues predominate over residues 50-66 (AATATGSTQLVESSPQP). A disulfide bridge links C96 with C245. 2 N-linked (GlcNAc...) asparagine glycosylation sites follow: N137 and N161.

It belongs to the glycosyltransferase 29 family. High expression in forebrain and to a lesser extent in cerebellum. No expression in salivary gland, intestine, liver, kidney, heart, lung, thymus and spleen.

The protein resides in the golgi apparatus membrane. It catalyses the reaction a ganglioside GM1b (d18:1(4E)) + CMP-N-acetyl-beta-neuraminate = a ganglioside GD1alpha (d18:1(4E)) + CMP + H(+). The catalysed reaction is N-acetyl-alpha-neuraminosyl-(2-&gt;3)-beta-D-galactosyl-(1-&gt;3)-N-acetyl-beta-D-glucosaminyl-(1-&gt;3)-beta-D-galactosyl-(1-&gt;4)-beta-D-glucosyl-(1&lt;-&gt;1')-N-acyl-sphing-4-enine + CMP-N-acetyl-beta-neuraminate = N-acetyl-alpha-neuraminosyl-(2-&gt;3)-beta-D-galactosyl-(1-&gt;3)-[N-acetyl-alpha-neuraminosyl-(2-&gt;6)]-N-acetyl-beta-D-glucosaminyl-(1-&gt;3)-beta-D-galactosyl-(1-&gt;4)-beta-D-glucosyl-(1&lt;-&gt;1')-N-acyl-sphing-4-enine + CMP + H(+). It functions in the pathway glycolipid biosynthesis. Functionally, predominantly catalyzes the biosynthesis of ganglioside GD1alpha from GM1b in the brain, by transferring the sialyl group (N-acetyl-alpha-neuraminyl or NeuAc) from CMP-NeuAc to the GalNAc residue on the NeuAc-alpha-2,3-Gal-beta-1,3-GalNAc sequence of GM1b. GD1alpha is a critical molecule in the communication and interaction between neuronal cells and their supportive cells, particularly in brain tissues, and functions as an adhesion molecule in the process of metastasis. Also shows activity towards sialyl Lc4Cer (N-acetyl-alpha-neuraminosyl-(2-&gt;3)-beta-D-galactosyl-(1-&gt;3)-N-acetyl-beta-D-glucosaminyl-(1-&gt;3)-beta-D-galactosyl-(1-&gt;4)-beta-D-glucosyl-(1&lt;-&gt;1')-N-acyl-sphing-4-enine) generating disialyl Lc4Cer, which can lead to the synthesis of disialyl Lewis a (Le(a)), suggested to be a cancer-associated antigen. The protein is Alpha-N-acetylgalactosaminide alpha-2,6-sialyltransferase 5 (St6galnac5) of Mus musculus (Mouse).